We begin with the raw amino-acid sequence, 697 residues long: DNA ligase (697 aa).

Residues 41–45 (DPVYD), 90–91 (SL), and E129 each bind NAD(+). The active-site N6-AMP-lysine intermediate is K131. Residues R152, E189, K308, and K332 each coordinate NAD(+). Zn(2+) is bound by residues C426, C429, C444, and C449. A BRCT domain is found at 617 to 697 (AANHHLTGST…ALQNMLRGST (81 aa)).

This sequence belongs to the NAD-dependent DNA ligase family. LigA subfamily. The cofactor is Mg(2+). It depends on Mn(2+) as a cofactor.

The enzyme catalyses NAD(+) + (deoxyribonucleotide)n-3'-hydroxyl + 5'-phospho-(deoxyribonucleotide)m = (deoxyribonucleotide)n+m + AMP + beta-nicotinamide D-nucleotide.. DNA ligase that catalyzes the formation of phosphodiester linkages between 5'-phosphoryl and 3'-hydroxyl groups in double-stranded DNA using NAD as a coenzyme and as the energy source for the reaction. It is essential for DNA replication and repair of damaged DNA. The protein is DNA ligase of Synechococcus sp. (strain CC9311).